A 454-amino-acid chain; its full sequence is Bifunctional protein GlmU (454 aa).

Residues 1–226 (MLAVAVLAAG…PDEVNGINNR (226 aa)) form a pyrophosphorylase region. UDP-N-acetyl-alpha-D-glucosamine-binding positions include 7-10 (LAAG), Lys21, Gln73, and 78-79 (GT). Asp103 is a Mg(2+) binding site. UDP-N-acetyl-alpha-D-glucosamine-binding residues include Gly140, Glu155, Asn170, and Asn224. Asn224 is a Mg(2+) binding site. Positions 227–247 (RQLAQCEGVLQQRLRDHWMDE) are linker. Positions 248-454 (GVTFVDPASC…WDRNTQAAQS (207 aa)) are N-acetyltransferase. The UDP-N-acetyl-alpha-D-glucosamine site is built by Arg329 and Lys347. His359 (proton acceptor) is an active-site residue. Positions 362 and 373 each coordinate UDP-N-acetyl-alpha-D-glucosamine. The acetyl-CoA site is built by Ala376, Ala419, and Arg436.

It in the N-terminal section; belongs to the N-acetylglucosamine-1-phosphate uridyltransferase family. In the C-terminal section; belongs to the transferase hexapeptide repeat family. As to quaternary structure, homotrimer. Requires Mg(2+) as cofactor.

Its subcellular location is the cytoplasm. The enzyme catalyses alpha-D-glucosamine 1-phosphate + acetyl-CoA = N-acetyl-alpha-D-glucosamine 1-phosphate + CoA + H(+). It catalyses the reaction N-acetyl-alpha-D-glucosamine 1-phosphate + UTP + H(+) = UDP-N-acetyl-alpha-D-glucosamine + diphosphate. It participates in nucleotide-sugar biosynthesis; UDP-N-acetyl-alpha-D-glucosamine biosynthesis; N-acetyl-alpha-D-glucosamine 1-phosphate from alpha-D-glucosamine 6-phosphate (route II): step 2/2. It functions in the pathway nucleotide-sugar biosynthesis; UDP-N-acetyl-alpha-D-glucosamine biosynthesis; UDP-N-acetyl-alpha-D-glucosamine from N-acetyl-alpha-D-glucosamine 1-phosphate: step 1/1. Its pathway is bacterial outer membrane biogenesis; LPS lipid A biosynthesis. In terms of biological role, catalyzes the last two sequential reactions in the de novo biosynthetic pathway for UDP-N-acetylglucosamine (UDP-GlcNAc). The C-terminal domain catalyzes the transfer of acetyl group from acetyl coenzyme A to glucosamine-1-phosphate (GlcN-1-P) to produce N-acetylglucosamine-1-phosphate (GlcNAc-1-P), which is converted into UDP-GlcNAc by the transfer of uridine 5-monophosphate (from uridine 5-triphosphate), a reaction catalyzed by the N-terminal domain. This is Bifunctional protein GlmU from Synechococcus sp. (strain CC9311).